The chain runs to 529 residues: All-trans-zeta-carotene desaturase (529 aa).

An FAD-binding site is contributed by 12–45 (IVVGAGPGGLSAAINLAGQGFRVTVVEKDAVPGG).

The protein belongs to the carotenoid/retinoid oxidoreductase family. FAD is required as a cofactor.

The enzyme catalyses all-trans-zeta-carotene + 2 A = all-trans-lycopene + 2 AH2. It functions in the pathway carotenoid biosynthesis; lycopene biosynthesis. In terms of biological role, dehydrogenates carotenes in the trans conformation: converts all-trans-zeta-carotene into all-trans-lycopene, one of the last dehydrogenation steps of lycopene biosynthesis. The chain is All-trans-zeta-carotene desaturase (carC) from Myxococcus xanthus.